Consider the following 383-residue polypeptide: Na(+)/H(+) antiporter NhaA (383 aa).

A run of 11 helical transmembrane segments spans residues 21–41 (AAGVMLMAASAIGMVFANSIW), 56–76 (LTMRGWINDALMALFFLLAGL), 94–114 (LLPGVAAIGGMVVPAIIYVAF), 123–143 (GWAIPTATDIAFALGVLALAG), 152–172 (VFLTALAIVDDLGAVIVIALF), 175–195 (GTLSVLPGAGVAAILGLLLML), 202–222 (TLFPYLLAGVPLWWLTLKSGI), 258–278 (FVILPLFGFANAGISLHGVTV), 287–307 (LGVGAALMLGKPLGVLGAVSI), 326–346 (IGIAFLCGIGFTMSLFIAILA), and 355–375 (QIKLGILSGSMLSGLCGYILL).

This sequence belongs to the NhaA Na(+)/H(+) (TC 2.A.33) antiporter family.

The protein localises to the cell inner membrane. The catalysed reaction is Na(+)(in) + 2 H(+)(out) = Na(+)(out) + 2 H(+)(in). Na(+)/H(+) antiporter that extrudes sodium in exchange for external protons. In Granulibacter bethesdensis (strain ATCC BAA-1260 / CGDNIH1), this protein is Na(+)/H(+) antiporter NhaA.